The chain runs to 348 residues: Anthranilate phosphoribosyltransferase (348 aa).

5-phospho-alpha-D-ribose 1-diphosphate-binding positions include G87, 90 to 91, T95, 97 to 100, 115 to 123, and S127; these read GD, NIST, and KHGNRSASG. G87 provides a ligand contact to anthranilate. Mg(2+) is bound at residue S99. Anthranilate is bound at residue N118. R173 contacts anthranilate. Mg(2+)-binding residues include D232 and E233.

Belongs to the anthranilate phosphoribosyltransferase family. Homodimer. Mg(2+) is required as a cofactor.

It catalyses the reaction N-(5-phospho-beta-D-ribosyl)anthranilate + diphosphate = 5-phospho-alpha-D-ribose 1-diphosphate + anthranilate. It participates in amino-acid biosynthesis; L-tryptophan biosynthesis; L-tryptophan from chorismate: step 2/5. Catalyzes the transfer of the phosphoribosyl group of 5-phosphorylribose-1-pyrophosphate (PRPP) to anthranilate to yield N-(5'-phosphoribosyl)-anthranilate (PRA). The chain is Anthranilate phosphoribosyltransferase from Synechococcus sp. (strain CC9311).